A 485-amino-acid chain; its full sequence is E3 ubiquitin-protein ligase RNF14 (485 aa).

In terms of domain architecture, RWD spans aspartate 11–tyrosine 137. The short motif at arginine 37–asparagine 45 is the D-box element. Positions lysine 217–leucine 458 are TRIAD supradomain. Zn(2+) is bound by residues cysteine 221, cysteine 224, cysteine 239, histidine 241, cysteine 244, cysteine 247, cysteine 266, cysteine 271, cysteine 310, cysteine 315, cysteine 330, cysteine 333, cysteine 338, cysteine 341, and histidine 346. The RING-type 1 zinc-finger motif lies at cysteine 221–cysteine 271. The IBR-type zinc-finger motif lies at alanine 290 to cysteine 351. Residue serine 349 is modified to Phosphoserine. 3 residues coordinate Zn(2+): cysteine 351, cysteine 405, and cysteine 408. The RING-type 2; atypical zinc-finger motif lies at cysteine 405 to cysteine 434. The active site involves cysteine 418. Zn(2+) contacts are provided by cysteine 423, cysteine 426, cysteine 431, cysteine 434, histidine 446, and cysteine 454.

This sequence belongs to the RBR family. RNF14 subfamily. As to quaternary structure, interacts with GCN1; interaction takes place in response to ribosome collisions and is required for ubiquitination of EEF1A1/eEF1A. Interacts with the ubiquitin-conjugating enzymes UBE2E1 and UBE2E2. Interacts with AR/androgen receptor. Interacts with TCF7/TCF1, TCF7L1/TCF3 and TCF7L2/TCF4; promoting Wnt signaling. In terms of processing, RING-type zinc finger-dependent and UBE2E2-dependent autoubiquitination.

The protein localises to the cytoplasm. Its subcellular location is the nucleus. The catalysed reaction is [E2 ubiquitin-conjugating enzyme]-S-ubiquitinyl-L-cysteine + [acceptor protein]-L-lysine = [E2 ubiquitin-conjugating enzyme]-L-cysteine + [acceptor protein]-N(6)-ubiquitinyl-L-lysine.. It functions in the pathway protein modification; protein ubiquitination. Its function is as follows. E3 ubiquitin-protein ligase that plays a key role in the RNF14-RNF25 translation quality control pathway, a pathway that takes place when a ribosome has stalled during translation, and which promotes ubiquitination and degradation of translation factors on stalled ribosomes. Recruited to stalled ribosomes by the ribosome collision sensor GCN1 and mediates 'Lys-6'-linked ubiquitination of target proteins, leading to their degradation. Mediates ubiquitination of EEF1A1/eEF1A and ETF1/eRF1 translation factors on stalled ribosomes, leading to their degradation. Also catalyzes ubiquitination of ribosomal proteins RPL0, RPL1, RPL12, RPS13 and RPS17. Specifically required to resolve RNA-protein cross-links caused by reactive aldehydes, which trigger translation stress by stalling ribosomes: acts by catalying 'Lys-6'-linked ubiquitination of RNA-protein cross-links, leading to their removal by the ATP-dependent unfoldase VCP and subsequent degradation by the proteasome. Independently of its function in the response to stalled ribosomes, acts as a regulator of transcription in Wnt signaling via its interaction with TCF transcription factors (TCF7/TCF1, TCF7L1/TCF3 and TCF7L2/TCF4). May also play a role as a coactivator for androgen- and, to a lesser extent, progesterone-dependent transcription. In Mus musculus (Mouse), this protein is E3 ubiquitin-protein ligase RNF14.